The following is a 183-amino-acid chain: Outer membrane protein H.8 (183 aa).

Residues 1–17 form the signal peptide; sequence MKAYLALISAAVIGLAA. Cys-18 carries N-palmitoyl cysteine lipidation. The S-diacylglycerol cysteine moiety is linked to residue Cys-18. A disordered region spans residues 27–51; that stretch reads AEATPAAEAPASEAPAAEAAPADAA. The region spanning 57–183 is the Plastocyanin-like domain; that stretch reads GNCAATVESN…LMNGKVTLVD (127 aa). Residues His-102, Cys-166, His-171, and Met-175 each coordinate Cu cation.

The cofactor is Cu cation.

The protein localises to the cell outer membrane. This Neisseria meningitidis serogroup C / serotype 2a (strain ATCC 700532 / DSM 15464 / FAM18) protein is Outer membrane protein H.8.